We begin with the raw amino-acid sequence, 601 residues long: Elongation factor 4 (601 aa).

The tr-type G domain occupies 6 to 188 (QFIRNFSIIA…AITKEIPAPK (183 aa)). Residues 18–23 (DHGKST) and 135–138 (NKID) contribute to the GTP site.

This sequence belongs to the TRAFAC class translation factor GTPase superfamily. Classic translation factor GTPase family. LepA subfamily.

It is found in the cell inner membrane. It catalyses the reaction GTP + H2O = GDP + phosphate + H(+). Functionally, required for accurate and efficient protein synthesis under certain stress conditions. May act as a fidelity factor of the translation reaction, by catalyzing a one-codon backward translocation of tRNAs on improperly translocated ribosomes. Back-translocation proceeds from a post-translocation (POST) complex to a pre-translocation (PRE) complex, thus giving elongation factor G a second chance to translocate the tRNAs correctly. Binds to ribosomes in a GTP-dependent manner. The protein is Elongation factor 4 of Leptospira borgpetersenii serovar Hardjo-bovis (strain JB197).